Consider the following 84-residue polypeptide: Large ribosomal subunit protein bL27 (84 aa).

Residues 1 to 25 form a disordered region; that stretch reads MAHKKAGGSSKNGRDSAGKRLGVKR.

Belongs to the bacterial ribosomal protein bL27 family.

The protein is Large ribosomal subunit protein bL27 of Syntrophotalea carbinolica (strain DSM 2380 / NBRC 103641 / GraBd1) (Pelobacter carbinolicus).